Reading from the N-terminus, the 233-residue chain is 2,3,4,5-tetrahydropyridine-2,6-dicarboxylate N-acetyltransferase (233 aa).

It belongs to the transferase hexapeptide repeat family. DapH subfamily.

It catalyses the reaction (S)-2,3,4,5-tetrahydrodipicolinate + acetyl-CoA + H2O = L-2-acetamido-6-oxoheptanedioate + CoA. It participates in amino-acid biosynthesis; L-lysine biosynthesis via DAP pathway; LL-2,6-diaminopimelate from (S)-tetrahydrodipicolinate (acetylase route): step 1/3. In terms of biological role, catalyzes the transfer of an acetyl group from acetyl-CoA to tetrahydrodipicolinate. The polypeptide is 2,3,4,5-tetrahydropyridine-2,6-dicarboxylate N-acetyltransferase (Leuconostoc mesenteroides subsp. mesenteroides (strain ATCC 8293 / DSM 20343 / BCRC 11652 / CCM 1803 / JCM 6124 / NCDO 523 / NBRC 100496 / NCIMB 8023 / NCTC 12954 / NRRL B-1118 / 37Y)).